Reading from the N-terminus, the 156-residue chain is Myosin regulatory light chain B, smooth adductor muscle (156 aa).

Blocked amino end (Ala) is present on Ala1. EF-hand domains follow at residues 15 to 50 (KQIQEMKEAFTMIDQNRDGFIDINDLKEMFSSLGRT) and 84 to 119 (DTEETLRNAFAMFDELDTKKLNIEYIKDLLENMGDN). Positions 28, 30, 32, and 39 each coordinate Ca(2+).

Its function is as follows. In molluscan muscle, calcium regulation is associated with myosin rather than with actin. Muscle myosin contains two types of light chains: the catalytic light chain, essential for ATPase activity, and the regulatory light chain, a calcium-binding protein responsible for Ca(2+) dependent binding and Ca(2+) dependent Mg-ATPase activity. The protein is Myosin regulatory light chain B, smooth adductor muscle of Mizuhopecten yessoensis (Japanese scallop).